The chain runs to 461 residues: Ornithine decarboxylase (461 aa).

Lys-69 bears the N6-(pyridoxal phosphate)lysine mark. Pyridoxal 5'-phosphate contacts are provided by residues Ser-200, Gly-237, and 274 to 277 (EPGR). Phosphoserine; by CK2 is present on Ser-303. 331–332 (YD) serves as a coordination point for substrate. Catalysis depends on Cys-360, which acts as the Proton donor; shared with dimeric partner. The residue at position 360 (Cys-360) is an S-nitrosocysteine. A substrate-binding site is contributed by Asp-361. Tyr-389 is a binding site for pyridoxal 5'-phosphate.

It belongs to the Orn/Lys/Arg decarboxylase class-II family. In terms of assembly, homodimer. Only the dimer is catalytically active, as the active sites are constructed of residues from both monomers. Pyridoxal 5'-phosphate serves as cofactor.

The enzyme catalyses L-ornithine + H(+) = putrescine + CO2. It participates in amine and polyamine biosynthesis; putrescine biosynthesis via L-ornithine pathway; putrescine from L-ornithine: step 1/1. With respect to regulation, inhibited by antizymes (AZs) OAZ1, OAZ2 and OAZ3 in response to polyamine levels. AZs inhibit the assembly of the functional homodimer by binding to ODC monomers. Additionally, OAZ1 targets ODC monomers for ubiquitin-independent proteolytic destruction by the 26S proteasome. Its function is as follows. Catalyzes the first and rate-limiting step of polyamine biosynthesis that converts ornithine into putrescine, which is the precursor for the polyamines, spermidine and spermine. Polyamines are essential for cell proliferation and are implicated in cellular processes, ranging from DNA replication to apoptosis. The sequence is that of Ornithine decarboxylase (Odc1) from Mus pahari (Gairdner's shrew-mouse).